The primary structure comprises 547 residues: CTP synthase (547 aa).

The interval 1 to 273 (MNNKKLKSKF…DHFILNHFQL (273 aa)) is amidoligase domain. Residue Ser19 coordinates CTP. Residue Ser19 coordinates UTP. 20 to 25 (SLGKGI) contributes to the ATP binding site. Tyr60 provides a ligand contact to L-glutamine. ATP is bound at residue Asp77. Mg(2+) contacts are provided by Asp77 and Glu147. CTP-binding positions include 154–156 (DIE), 194–199 (KTKPTQ), and Lys230. UTP is bound by residues 194–199 (KTKPTQ) and Lys230. Residues 306–539 (YVILHDAYLS…VEAALLKNGK (234 aa)) enclose the Glutamine amidotransferase type-1 domain. Gly361 contributes to the L-glutamine binding site. Catalysis depends on Cys388, which acts as the Nucleophile; for glutamine hydrolysis. L-glutamine-binding positions include 389 to 392 (FGMQ), Glu412, and Arg466. Residues His512 and Glu514 contribute to the active site.

The protein belongs to the CTP synthase family. Homotetramer.

The enzyme catalyses UTP + L-glutamine + ATP + H2O = CTP + L-glutamate + ADP + phosphate + 2 H(+). It carries out the reaction L-glutamine + H2O = L-glutamate + NH4(+). It catalyses the reaction UTP + NH4(+) + ATP = CTP + ADP + phosphate + 2 H(+). It functions in the pathway pyrimidine metabolism; CTP biosynthesis via de novo pathway; CTP from UDP: step 2/2. With respect to regulation, allosterically activated by GTP, when glutamine is the substrate; GTP has no effect on the reaction when ammonia is the substrate. The allosteric effector GTP functions by stabilizing the protein conformation that binds the tetrahedral intermediate(s) formed during glutamine hydrolysis. Inhibited by the product CTP, via allosteric rather than competitive inhibition. Its function is as follows. Catalyzes the ATP-dependent amination of UTP to CTP with either L-glutamine or ammonia as the source of nitrogen. Regulates intracellular CTP levels through interactions with the four ribonucleotide triphosphates. In Phytoplasma australiense, this protein is CTP synthase.